A 321-amino-acid polypeptide reads, in one-letter code: Cytochrome c biogenesis protein CcsA (321 aa).

8 helical membrane passes run methionine 1 to valine 21, leucine 36 to isoleucine 56, leucine 70 to valine 90, glycine 97 to leucine 117, isoleucine 143 to isoleucine 163, valine 229 to asparagine 249, tryptophan 256 to leucine 276, and alanine 290 to leucine 310.

Belongs to the CcmF/CycK/Ccl1/NrfE/CcsA family. May interact with Ccs1.

The protein resides in the plastid. It localises to the chloroplast thylakoid membrane. Its function is as follows. Required during biogenesis of c-type cytochromes (cytochrome c6 and cytochrome f) at the step of heme attachment. In Cycas taitungensis (Prince sago), this protein is Cytochrome c biogenesis protein CcsA.